The primary structure comprises 487 residues: Cytochrome P450 2C4 (487 aa).

C432 provides a ligand contact to heme.

The protein belongs to the cytochrome P450 family. Requires heme as cofactor.

It localises to the endoplasmic reticulum membrane. The protein localises to the microsome membrane. It catalyses the reaction an organic molecule + reduced [NADPH--hemoprotein reductase] + O2 = an alcohol + oxidized [NADPH--hemoprotein reductase] + H2O + H(+). Functionally, cytochromes P450 are a group of heme-thiolate monooxygenases. In liver microsomes, this enzyme is involved in an NADPH-dependent electron transport pathway. It oxidizes a variety of structurally unrelated compounds, including steroids, fatty acids, and xenobiotics. This chain is Cytochrome P450 2C4 (CYP2C4), found in Oryctolagus cuniculus (Rabbit).